The following is an 81-amino-acid chain: ATP synthase subunit c, chloroplastic (81 aa).

2 helical membrane passes run 3-23 (PLIPAASVIAAGLAVGLASIG) and 57-77 (LAFMEALTIYGLVVALALLFA).

Belongs to the ATPase C chain family. As to quaternary structure, F-type ATPases have 2 components, F(1) - the catalytic core - and F(0) - the membrane proton channel. F(1) has five subunits: alpha(3), beta(3), gamma(1), delta(1), epsilon(1). F(0) has four main subunits: a(1), b(1), b'(1) and c(10-14). The alpha and beta chains form an alternating ring which encloses part of the gamma chain. F(1) is attached to F(0) by a central stalk formed by the gamma and epsilon chains, while a peripheral stalk is formed by the delta, b and b' chains.

Its subcellular location is the plastid. It localises to the chloroplast thylakoid membrane. F(1)F(0) ATP synthase produces ATP from ADP in the presence of a proton or sodium gradient. F-type ATPases consist of two structural domains, F(1) containing the extramembraneous catalytic core and F(0) containing the membrane proton channel, linked together by a central stalk and a peripheral stalk. During catalysis, ATP synthesis in the catalytic domain of F(1) is coupled via a rotary mechanism of the central stalk subunits to proton translocation. Its function is as follows. Key component of the F(0) channel; it plays a direct role in translocation across the membrane. A homomeric c-ring of between 10-14 subunits forms the central stalk rotor element with the F(1) delta and epsilon subunits. This chain is ATP synthase subunit c, chloroplastic, found in Cycas taitungensis (Prince sago).